The following is a 242-amino-acid chain: Biosynthetic peptidoglycan transglycosylase (242 aa).

A helical transmembrane segment spans residues 19-39 (ILAALAVFWGGGIALFSVVPV).

The protein belongs to the glycosyltransferase 51 family.

Its subcellular location is the cell inner membrane. It catalyses the reaction [GlcNAc-(1-&gt;4)-Mur2Ac(oyl-L-Ala-gamma-D-Glu-L-Lys-D-Ala-D-Ala)](n)-di-trans,octa-cis-undecaprenyl diphosphate + beta-D-GlcNAc-(1-&gt;4)-Mur2Ac(oyl-L-Ala-gamma-D-Glu-L-Lys-D-Ala-D-Ala)-di-trans,octa-cis-undecaprenyl diphosphate = [GlcNAc-(1-&gt;4)-Mur2Ac(oyl-L-Ala-gamma-D-Glu-L-Lys-D-Ala-D-Ala)](n+1)-di-trans,octa-cis-undecaprenyl diphosphate + di-trans,octa-cis-undecaprenyl diphosphate + H(+). Its pathway is cell wall biogenesis; peptidoglycan biosynthesis. Its function is as follows. Peptidoglycan polymerase that catalyzes glycan chain elongation from lipid-linked precursors. This Salmonella newport (strain SL254) protein is Biosynthetic peptidoglycan transglycosylase.